Consider the following 466-residue polypeptide: tRNA(Ile)-lysidine synthase (466 aa).

26–31 (SGGSDS) is an ATP binding site.

This sequence belongs to the tRNA(Ile)-lysidine synthase family.

Its subcellular location is the cytoplasm. It carries out the reaction cytidine(34) in tRNA(Ile2) + L-lysine + ATP = lysidine(34) in tRNA(Ile2) + AMP + diphosphate + H(+). Its function is as follows. Ligates lysine onto the cytidine present at position 34 of the AUA codon-specific tRNA(Ile) that contains the anticodon CAU, in an ATP-dependent manner. Cytidine is converted to lysidine, thus changing the amino acid specificity of the tRNA from methionine to isoleucine. This Oceanobacillus iheyensis (strain DSM 14371 / CIP 107618 / JCM 11309 / KCTC 3954 / HTE831) protein is tRNA(Ile)-lysidine synthase.